The sequence spans 368 residues: Divinyl chlorophyll a/b light-harvesting protein PcbA (368 aa).

The next 6 membrane-spanning stretches (helical) occupy residues 27–47 (FIAS…ANTL), 63–83 (GFVV…NGVI), 89–109 (MLVV…GAML), 203–223 (VMGG…WHIF), 243–263 (FVLS…AFWA), and 307–327 (LSNF…WHGL).

It belongs to the PsbB/PsbC family. IsiA/Pcb subfamily. As to quaternary structure, the antenna complex consists of divinyl chlorophylls (a and b) and divinyl chlorophyll a/b binding proteins. Forms complexes with PSII, consisting of a PSII dimer and 4 or 8 PcbA subunits. These complexes are also found under conditions of iron-starvation. It depends on divinyl chlorophyll a as a cofactor. The cofactor is divinyl chlorophyll b.

The protein resides in the cellular thylakoid membrane. The antenna complex functions as a light receptor, it captures and delivers excitation energy to photosystems II. The Prochlorales pcb genes are not related to higher plant LHCs. This chain is Divinyl chlorophyll a/b light-harvesting protein PcbA (pcbA), found in Prochlorococcus marinus (strain MIT 9313).